A 316-amino-acid chain; its full sequence is 4-hydroxyphenylacetate decarboxylase activating enzyme (316 aa).

The region spanning His-20–Ala-307 is the Radical SAM core domain. Positions 34, 38, 41, 60, 66, 69, and 105 each coordinate [4Fe-4S] cluster. Position 40-42 (Trp-40–Ala-42) interacts with S-adenosyl-L-methionine. The 4Fe-4S ferredoxin-type domain occupies Asn-84–Lys-115. Residues Gly-144, Asp-193–Lys-195, and His-267 contribute to the S-adenosyl-L-methionine site.

The protein belongs to the organic radical-activating enzymes family. Monomer. The cofactor is [4Fe-4S] cluster.

It carries out the reaction glycyl-[protein] + reduced [flavodoxin] + S-adenosyl-L-methionine = glycin-2-yl radical-[protein] + semiquinone [flavodoxin] + 5'-deoxyadenosine + L-methionine + H(+). Its function is as follows. Catalyzes activation of 4-hydroxyphenylacetate decarboxylase under anaerobic conditions by generation of an organic free radical on a glycine residue, via a homolytic cleavage of S-adenosyl-L-methionine (SAM). The protein is 4-hydroxyphenylacetate decarboxylase activating enzyme of Clostridioides difficile (strain CD196) (Peptoclostridium difficile).